Reading from the N-terminus, the 572-residue chain is Methionine--tRNA ligase (572 aa).

The 'HIGH' region signature appears at 11-21; the sequence is PYINGIKHLGN. 4 residues coordinate Zn(2+): C143, C146, C156, and C159. The 'KMSKS' region motif lies at 346–350; the sequence is QFSTS. T349 lines the ATP pocket.

It belongs to the class-I aminoacyl-tRNA synthetase family. MetG type 1 subfamily. In terms of assembly, monomer. Requires Zn(2+) as cofactor.

Its subcellular location is the cytoplasm. The catalysed reaction is tRNA(Met) + L-methionine + ATP = L-methionyl-tRNA(Met) + AMP + diphosphate. Its function is as follows. Is required not only for elongation of protein synthesis but also for the initiation of all mRNA translation through initiator tRNA(fMet) aminoacylation. This is Methionine--tRNA ligase from Paracoccus denitrificans (strain Pd 1222).